A 496-amino-acid chain; its full sequence is Alanine aminotransferase 1 (496 aa).

Alanine 2 is subject to N-acetylalanine. Position 22 is a phosphothreonine (threonine 22). At lysine 314 the chain carries N6-(pyridoxal phosphate)lysine.

This sequence belongs to the class-I pyridoxal-phosphate-dependent aminotransferase family. Alanine aminotransferase subfamily. In terms of assembly, homodimer. The cofactor is pyridoxal 5'-phosphate. Liver, kidney, heart, and skeletal muscles. Expressed at moderate levels in the adipose tissue.

It is found in the cytoplasm. It carries out the reaction L-alanine + 2-oxoglutarate = pyruvate + L-glutamate. Its pathway is amino-acid degradation; L-alanine degradation via transaminase pathway; pyruvate from L-alanine: step 1/1. In terms of biological role, catalyzes the reversible transamination between alanine and 2-oxoglutarate to form pyruvate and glutamate. Participates in cellular nitrogen metabolism and also in liver gluconeogenesis starting with precursors transported from skeletal muscles. In Homo sapiens (Human), this protein is Alanine aminotransferase 1 (GPT).